The following is a 674-amino-acid chain: Probable potassium transport system protein Kup (674 aa).

The next 12 helical transmembrane spans lie at 7–27 (IFWG…TSPL), 52–72 (LSLV…LIAL), 95–115 (WLIL…TLTP), 145–165 (LVTF…TSFI), 169–189 (FGPL…VNLI), 204–224 (LMLL…SVFL), 244–264 (IYLT…GQGA), 291–311 (VYLF…QALI), 342–362 (IYIR…LVYF), 368–388 (MEAA…ILLS), 397–417 (VVFN…FLIS), and 425–445 (GGYV…IWYF).

It belongs to the HAK/KUP transporter (TC 2.A.72) family.

It localises to the cell membrane. The catalysed reaction is K(+)(in) + H(+)(in) = K(+)(out) + H(+)(out). Its function is as follows. Transport of potassium into the cell. Likely operates as a K(+):H(+) symporter. This chain is Probable potassium transport system protein Kup, found in Ligilactobacillus salivarius (strain UCC118) (Lactobacillus salivarius).